A 368-amino-acid polypeptide reads, in one-letter code: Agmatine deiminase (368 aa).

The active-site Amidino-cysteine intermediate is Cys357.

Belongs to the agmatine deiminase family. In terms of assembly, homodimer.

The catalysed reaction is agmatine + H2O = N-carbamoylputrescine + NH4(+). Its pathway is amine and polyamine biosynthesis; putrescine biosynthesis via agmatine pathway; N-carbamoylputrescine from agmatine: step 1/1. Functionally, mediates the hydrolysis of agmatine into N-carbamoylputrescine in the arginine decarboxylase (ADC) pathway of putrescine biosynthesis, a basic polyamine. The protein is Agmatine deiminase of Pseudomonas putida (strain ATCC 700007 / DSM 6899 / JCM 31910 / BCRC 17059 / LMG 24140 / F1).